The sequence spans 345 residues: KRR1 small subunit processome component homolog (345 aa).

Residues 125–193 enclose the KH domain; sequence DIIKIGNLVH…VRDIVLETMN (69 aa). The segment covering 232–245 has biased composition (basic residues); that stretch reads NISKRKQPKVKKQK. Disordered regions lie at residues 232 to 260 and 273 to 345; these read NISK…ESKV and QEQK…ARSS. Residues 270-298 are a coiled coil; it reads FLNQEQKQAKRNQERTEKQKEAAKRQDER. Basic and acidic residues-rich tracts occupy residues 276–302 and 315–330; these read KQAK…RNKD and RKKE…DVKA. Residues 331–345 are compositionally biased toward basic residues; that stretch reads LKAKLIKANKKARSS.

Belongs to the KRR1 family. Monomer. Component of the ribosomal small subunit (SSU) processome.

The protein resides in the nucleus. It is found in the nucleolus. Functionally, required for 40S ribosome biogenesis. Involved in nucleolar processing of pre-18S ribosomal RNA and ribosome assembly. Binds to RNA. Required for female germline development, cell viability during eye development and for survival of dividing cells and epithelial cells during early wing disk development. This chain is KRR1 small subunit processome component homolog (dbe), found in Drosophila melanogaster (Fruit fly).